The chain runs to 179 residues: MSKQSNKLLHIATIGKSVGLGGDMKLHIKSDFPEQFKKGVSFFINENETLTLSDINHERALIKFVGYNSPEDAKKLTNKNLYTTIERTRKECRLEKDEYFWFDIEGCSVVEDGKVLGIVDELDRMGITNYLCVITDETLVKSGFAKSFLIPFREPFTINTDIKEKIITVIGAMDILEAS.

The 80-residue stretch at 96–175 (KDEYFWFDIE…IITVIGAMDI (80 aa)) folds into the PRC barrel domain.

It belongs to the RimM family. As to quaternary structure, binds ribosomal protein uS19.

It localises to the cytoplasm. Functionally, an accessory protein needed during the final step in the assembly of 30S ribosomal subunit, possibly for assembly of the head region. Essential for efficient processing of 16S rRNA. May be needed both before and after RbfA during the maturation of 16S rRNA. It has affinity for free ribosomal 30S subunits but not for 70S ribosomes. In Sulfurimonas denitrificans (strain ATCC 33889 / DSM 1251) (Thiomicrospira denitrificans (strain ATCC 33889 / DSM 1251)), this protein is Ribosome maturation factor RimM.